We begin with the raw amino-acid sequence, 404 residues long: 5-aminolevulinate synthase (404 aa).

Substrate contacts are provided by Arg21 and Ser136. 3 residues coordinate pyridoxal 5'-phosphate: Ser188, His216, and Thr244. The active site involves Lys247. Lys247 bears the N6-(pyridoxal phosphate)lysine mark. 2 residues coordinate pyridoxal 5'-phosphate: Thr276 and Thr277. Residue Thr362 coordinates substrate.

It belongs to the class-II pyridoxal-phosphate-dependent aminotransferase family. Homodimer. The cofactor is pyridoxal 5'-phosphate.

It catalyses the reaction succinyl-CoA + glycine + H(+) = 5-aminolevulinate + CO2 + CoA. It functions in the pathway porphyrin-containing compound metabolism; protoporphyrin-IX biosynthesis; 5-aminolevulinate from glycine: step 1/1. This Rhizobium meliloti (strain 1021) (Ensifer meliloti) protein is 5-aminolevulinate synthase (hemA).